Consider the following 470-residue polypeptide: Light-independent protochlorophyllide reductase subunit N (470 aa).

Residues Cys-22, Cys-47, and Cys-107 each coordinate [4Fe-4S] cluster.

Belongs to the BchN/ChlN family. Protochlorophyllide reductase is composed of three subunits; ChlL, ChlN and ChlB. Forms a heterotetramer of two ChlB and two ChlN subunits. It depends on [4Fe-4S] cluster as a cofactor.

The protein resides in the plastid. The protein localises to the chloroplast. The catalysed reaction is chlorophyllide a + oxidized 2[4Fe-4S]-[ferredoxin] + 2 ADP + 2 phosphate = protochlorophyllide a + reduced 2[4Fe-4S]-[ferredoxin] + 2 ATP + 2 H2O. The protein operates within porphyrin-containing compound metabolism; chlorophyll biosynthesis (light-independent). Functionally, component of the dark-operative protochlorophyllide reductase (DPOR) that uses Mg-ATP and reduced ferredoxin to reduce ring D of protochlorophyllide (Pchlide) to form chlorophyllide a (Chlide). This reaction is light-independent. The NB-protein (ChlN-ChlB) is the catalytic component of the complex. This chain is Light-independent protochlorophyllide reductase subunit N, found in Pinus koraiensis (Korean pine).